Here is a 252-residue protein sequence, read N- to C-terminus: MKLLKTVPAIVMLAGGMFASLNAAADDSVFTVMDDPASAKKPFEGNLNAGYLAQSGNTKSSSLTADTTMTWYGHTTAWSLWGNASNTSSNDERSSEKYAAGGRSRFNLTDYDYLFGQASWLTDRYNGYRERDVLTAGYGRQFLNGPVHSFRFEFGPGVRYDKYTDNASETQPLGYASGAYAWQLTDNAKFTQGVSVFGAEDTTLNSESALNVAINEHFGLKVAYNVTWNSEPPESAPEHTDRRTTLSLGYSM.

An N-terminal signal peptide occupies residues 1–23; it reads MKLLKTVPAIVMLAGGMFASLNA. The segment at 231–252 is disordered; that stretch reads EPPESAPEHTDRRTTLSLGYSM.

This is an uncharacterized protein from Escherichia coli (strain K12).